The sequence spans 1353 residues: Protein prickle (1353 aa).

Disordered stretches follow at residues 130 to 206 (VDDG…TKRN), 266 to 292 (QEEE…PPLP), and 500 to 540 (AKYS…SAHA). The segment covering 147–165 (TPTATATAGRPLFPLSSSP) has biased composition (low complexity). Residues 166–178 (RRSKKLLRSLRAH) are compositionally biased toward basic residues. Over residues 179–189 (VKGESRPEKPA) the composition is skewed to basic and acidic residues. The span at 514-532 (LSPALSTPSPPSLLHHPAA) shows a compositional bias: low complexity. Positions 548-656 (MDMQRQSHSD…NVRQLMSARP (109 aa)) constitute a PET domain. LIM zinc-binding domains lie at 655-719 (RPCD…ETLK), 720-780 (PRCS…MFAE), and 781-843 (YCDY…GEPP). Disordered regions lie at residues 840 to 892 (GEPP…HQAS), 933 to 962 (HCRS…NMSP), and 1062 to 1303 (ADIM…SSSS). The segment covering 861–892 (TQRVRPQTRITSSHASSSPPMSPQQQQQHQAS) has biased composition (low complexity). Polar residues-rich tracts occupy residues 952–962 (RASSTSHNMSP) and 1111–1120 (SLNTPLSAHS). A compositionally biased stretch (low complexity) spans 1130 to 1142 (SILSGASSSSPMS). Residues 1177–1205 (GDKDRDRDRERDRDRDRDKGGDKDRESGR) show a composition bias toward basic and acidic residues. Composition is skewed to basic residues over residues 1207 to 1220 (GPGH…RRKS) and 1228 to 1240 (NHHR…RSHS). Basic and acidic residues predominate over residues 1269-1284 (ETAHKSPRQQRERERE).

It belongs to the prickle / espinas / testin family. Interacts with dsh; PET and LIM domains interact with dsh DEP domain, in wing cells. Interacts with Vang in photoreceptor cells.

The protein resides in the cell membrane. Functionally, acts in a planar cell polarity (PCP) complex; polarization along the apical/basal axis of epithelial cells. PCP signaling in the wing disk requires the receptor fz and the cytoplasmic proteins dsh and pk. These act in a feedback loop leading to activation of the jnk cascade and subsequent polarized arrangement of hairs and bristles. Dgo and pk compete with one another for dsh binding, thereby modulating fz dsh activity and ensuring tight control over fz PCP signaling. Vang, stan and pk function together to regulate the establishment of tissue polarity in the adult eye. The sequence is that of Protein prickle from Drosophila pseudoobscura pseudoobscura (Fruit fly).